Here is a 411-residue protein sequence, read N- to C-terminus: AT-hook motif nuclear-localized protein 14 (411 aa).

4 disordered regions span residues 1–32 (MDPN…QRLT), 54–164 (ASTG…LGSV), 289–348 (KDAA…HQAG), and 366–411 (THSR…QIPD). Residues 7-19 (HHHHQQQQLHHLH) are compositionally biased toward basic residues. Positions 20–29 (QQQQQQQQQQ) are enriched in low complexity. Positions 54–66 (ASTGNAVPSSNNG) are enriched in polar residues. A Bipartite nuclear localization signal motif is present at residues 105 to 113 (KRKRGRPRK). The segment at residues 105–117 (KRKRGRPRKYVTP) is a DNA-binding region (a.T hook). 2 stretches are compositionally biased toward low complexity: residues 120–135 (ALAA…SSSA) and 144–159 (VTGG…SKKS). The region spanning 165 to 305 (GKTGQCFTPH…GKGDASNSGS (141 aa)) is the PPC domain. The span at 306-315 (RLTSPVSSGQ) shows a compositional bias: polar residues. A compositionally biased stretch (gly residues) spans 374–390 (RGGGNSGHDGRGGGGYD).

It localises to the nucleus. In terms of biological role, transcription factor that specifically binds AT-rich DNA sequences related to the nuclear matrix attachment regions (MARs). This Arabidopsis thaliana (Mouse-ear cress) protein is AT-hook motif nuclear-localized protein 14.